Consider the following 640-residue polypeptide: Glutamyl-tRNA(Gln) amidotransferase subunit E (640 aa).

The protein belongs to the GatB/GatE family. GatE subfamily. As to quaternary structure, heterodimer of GatD and GatE.

The enzyme catalyses L-glutamyl-tRNA(Gln) + L-glutamine + ATP + H2O = L-glutaminyl-tRNA(Gln) + L-glutamate + ADP + phosphate + H(+). Its function is as follows. Allows the formation of correctly charged Gln-tRNA(Gln) through the transamidation of misacylated Glu-tRNA(Gln) in organisms which lack glutaminyl-tRNA synthetase. The reaction takes place in the presence of glutamine and ATP through an activated gamma-phospho-Glu-tRNA(Gln). The GatDE system is specific for glutamate and does not act on aspartate. This is Glutamyl-tRNA(Gln) amidotransferase subunit E from Methanopyrus kandleri (strain AV19 / DSM 6324 / JCM 9639 / NBRC 100938).